The chain runs to 457 residues: MRSAAVLALLLCAGQVTALPVNSPMNKGDTEVMKCIVEVISDTLSKPSPMPVSQECFETLRGDERILSILRHQNLLKELQDLALQGAKERAHQQKKHSGFEDELSEVLENQSSQAELKEAVEEPSSKDVMEKREDSKEAEKSGEATDGARPQALPEPMQESKAEGNNQAPGEEEEEEEEATNTHPPASLPSQKYPGPQAEGDSEGLSQGLVDREKGLSAEPGWQAKREEEEEEEEEAEAGEEAVPEEEGPTVVLNPHPSLGYKEIRKGESRSEALAVDGAGKPGAEEAQDPEGKGEQEHSQQKEEEEEMAVVPQGLFRGGKSGELEQEEERLSKEWEDSKRWSKMDQLAKELTAEKRLEGQEEEEDNRDSSMKLSFRARAYGFRGPGPQLRRGWRPSSREDSLEAGLPLQVRGYPEEKKEEEGSANRRPEDQELESLSAIEAELEKVAHQLQALRRG.

A signal peptide spans 1–18 (MRSAAVLALLLCAGQVTA). C35 and C56 form a disulfide bridge. Residues 41-59 (SDTLSKPSPMPVSQECFET) form an O-glycosylated at one site only in cerebrospinal fluid region. Residues 88–440 (KERAHQQKKH…DQELESLSAI (353 aa)) are disordered. Residues 116-144 (ELKEAVEEPSSKDVMEKREDSKEAEKSGE) show a composition bias toward basic and acidic residues. S142 is modified (phosphoserine). Positions 171–180 (GEEEEEEEEA) are enriched in acidic residues. T181 and T183 each carry an O-linked (GalNAc...) threonine glycan. Positions 181 to 191 (TNTHPPASLPS) are O-glycosylated at one site only in cerebrospinal fluid. Residues 182–191 (NTHPPASLPS) are compositionally biased toward polar residues. Y194 is subject to Phosphotyrosine. 2 positions are modified to phosphoserine: S203 and S218. Positions 229 to 249 (EEEEEEEEAEAGEEAVPEEEG) are enriched in acidic residues. T251 carries O-linked (GalNAc...) threonine glycosylation. 2 stretches are compositionally biased toward basic and acidic residues: residues 263–272 (KEIRKGESRS) and 291–303 (PEGK…SQQK). A phosphoserine mark is found at S270 and S300. A Glycine amide modification is found at G319. Phosphoserine is present on residues S322, S333, and S371. Over residues 330-360 (ERLSKEWEDSKRWSKMDQLAKELTAEKRLEG) the composition is skewed to basic and acidic residues. M372 carries the methionine sulfoxide modification. S398, S402, S424, and S438 each carry phosphoserine. Over residues 414–431 (YPEEKKEEEGSANRRPED) the composition is skewed to basic and acidic residues. Residue S424 is glycosylated (O-linked (Xyl...) (chondroitin sulfate) serine). At R456 the chain carries Arginine amide.

This sequence belongs to the chromogranin/secretogranin protein family. As to quaternary structure, self-interacts; self-assembly is promoted in vitro by chondroitin sulfate attachment which occurs at mildly acidic pH conditions. Interacts with SCG3. Interacts with ITPR1 in the secretory granules. Post-translationally, sulfated on tyrosine residues and/or contains sulfated glycans. O-glycosylated with core 1 or possibly core 8 glycans. Contains chondroitin sulfate (CS); CS attachment is pH-dependent, being observed at mildly acidic conditions of pH 5 but not at neutral pH, and promotes self-assembly in vitro. In terms of processing, proteolytic processing gives rise to an additional longer form of catestatin (residues 358-390) which displays a less potent catecholamine release-inhibitory activity. Plasmin-mediated proteolytic processing can give rise to additional shorter and longer forms of catestatin peptides. Detected in cerebrospinal fluid (at protein level). Detected in urine (at protein level). In terms of tissue distribution, found in the brain.

The protein localises to the secreted. The protein resides in the cytoplasmic vesicle. It localises to the secretory vesicle. It is found in the neuronal dense core vesicle. Functionally, strongly inhibits glucose induced insulin release from the pancreas. Its function is as follows. Inhibits catecholamine release from chromaffin cells and noradrenergic neurons by acting as a non-competitive nicotinic cholinergic antagonist. Displays antibacterial activity against Gram-positive bacteria S.aureus and M.luteus, and Gram-negative bacteria E.coli and P.aeruginosa. Can induce mast cell migration, degranulation and production of cytokines and chemokines. Acts as a potent scavenger of free radicals in vitro. May play a role in the regulation of cardiac function and blood pressure. Regulates granule biogenesis in endocrine cells by up-regulating the transcription of protease nexin 1 (SERPINE2) via a cAMP-PKA-SP1 pathway. This leads to inhibition of granule protein degradation in the Golgi complex which in turn promotes granule formation. This is Chromogranin-A (CHGA) from Homo sapiens (Human).